The sequence spans 193 residues: Peptidyl-tRNA hydrolase (193 aa).

Residue Tyr15 participates in tRNA binding. Catalysis depends on His20, which acts as the Proton acceptor. The tRNA site is built by Phe65, Asn67, and Asn113.

Belongs to the PTH family. As to quaternary structure, monomer.

The protein resides in the cytoplasm. It carries out the reaction an N-acyl-L-alpha-aminoacyl-tRNA + H2O = an N-acyl-L-amino acid + a tRNA + H(+). Functionally, hydrolyzes ribosome-free peptidyl-tRNAs (with 1 or more amino acids incorporated), which drop off the ribosome during protein synthesis, or as a result of ribosome stalling. Catalyzes the release of premature peptidyl moieties from peptidyl-tRNA molecules trapped in stalled 50S ribosomal subunits, and thus maintains levels of free tRNAs and 50S ribosomes. In Ehrlichia ruminantium (strain Gardel), this protein is Peptidyl-tRNA hydrolase.